Consider the following 399-residue polypeptide: MSKTIAINAGSSSLKWQLYQMPEEKVLAQGIIERIGLTDSISTVKYDGKKEEHILDIPDHTEAVKRLLNDLIHFGIIGTYDEITGVGHRIVAGGEYFKESVVVDDKVVEQVEELAALAPLHNPGAAAGIRAFRKILPDITSVCVFDTSFHTTMQKHTYLYPIPQKYYTDYKVRKYGAHGTSHKYVAEEAAKMLGRPLDELKLITAHVGNGVSITANYHGQSVDTSMGFTPLAGPMMGTRSGDIDPAIIPYLIAQDPELKDAADVVNMLNKQSGLGGVSGISSDMRDIEAGLQANNPDAVLAYNIFIDRIKKFIGQYFAVLNGADALVFTAGMGENAPLMRQDVVNGLSWFGMEIDPEKNVFGYRGDISTAASKVKVLVISTDEELCIARDVERLKQTIS.

Residue Asn-8 participates in Mg(2+) binding. Lys-15 is an ATP binding site. Residue Arg-89 coordinates substrate. Catalysis depends on Asp-146, which acts as the Proton donor/acceptor. ATP-binding positions include 206–210 (HVGNG), 283–285 (DMR), and 331–335 (GMGEN). Glu-383 is a binding site for Mg(2+).

This sequence belongs to the acetokinase family. As to quaternary structure, homodimer. The cofactor is Mg(2+). Mn(2+) is required as a cofactor.

Its subcellular location is the cytoplasm. The catalysed reaction is acetate + ATP = acetyl phosphate + ADP. The protein operates within metabolic intermediate biosynthesis; acetyl-CoA biosynthesis; acetyl-CoA from acetate: step 1/2. Catalyzes the formation of acetyl phosphate from acetate and ATP. Can also catalyze the reverse reaction. This is Acetate kinase from Streptococcus equi subsp. equi (strain 4047).